Reading from the N-terminus, the 73-residue chain is Putative membrane protein insertion efficiency factor (73 aa).

It belongs to the UPF0161 family.

The protein localises to the cell inner membrane. Could be involved in insertion of integral membrane proteins into the membrane. This is Putative membrane protein insertion efficiency factor from Neisseria gonorrhoeae (strain ATCC 700825 / FA 1090).